Consider the following 310-residue polypeptide: Putative S-adenosyl-L-methionine-dependent methyltransferase MMAR_0357 (310 aa).

Residues aspartate 132 and aspartate 161–leucine 162 contribute to the S-adenosyl-L-methionine site.

The protein belongs to the UPF0677 family.

Functionally, exhibits S-adenosyl-L-methionine-dependent methyltransferase activity. This chain is Putative S-adenosyl-L-methionine-dependent methyltransferase MMAR_0357, found in Mycobacterium marinum (strain ATCC BAA-535 / M).